The following is a 479-amino-acid chain: GTPase Obg (479 aa).

The Obg domain maps to 2–159 (PRFVDRVVIH…RDLTLELKTV (158 aa)). One can recognise an OBG-type G domain in the interval 160-340 (ADVGLVGFPS…LIFGLWQMVS (181 aa)). Residues 166 to 173 (GFPSAGKS), 191 to 195 (FTTLV), 212 to 215 (DVPG), 292 to 295 (NKID), and 321 to 323 (STV) contribute to the GTP site. 2 residues coordinate Mg(2+): serine 173 and threonine 193. Residues 358–436 (PVPVDDSGFD…IGEMTFDWEP (79 aa)) enclose the OCT domain. The segment at 438 to 479 (TPAGGHVAMSGRGTDVRLERSDRVGAAERKAARRQRRERDDD) is disordered. The span at 451–467 (TDVRLERSDRVGAAERK) shows a compositional bias: basic and acidic residues.

The protein belongs to the TRAFAC class OBG-HflX-like GTPase superfamily. OBG GTPase family. In terms of assembly, monomer. Mg(2+) is required as a cofactor.

It is found in the cytoplasm. In terms of biological role, an essential GTPase which binds GTP, GDP and possibly (p)ppGpp with moderate affinity, with high nucleotide exchange rates and a fairly low GTP hydrolysis rate. Plays a role in control of the cell cycle, stress response, ribosome biogenesis and in those bacteria that undergo differentiation, in morphogenesis control. In Mycobacterium marinum (strain ATCC BAA-535 / M), this protein is GTPase Obg.